The sequence spans 382 residues: UDP-N-acetylglucosamine--N-acetylmuramyl-(pentapeptide) pyrophosphoryl-undecaprenol N-acetylglucosamine transferase (382 aa).

Residues 11–13 (TGG), Asn-124, Arg-164, Ser-192, and Gln-314 contribute to the UDP-N-acetyl-alpha-D-glucosamine site.

Belongs to the glycosyltransferase 28 family. MurG subfamily.

It localises to the cell membrane. The enzyme catalyses di-trans,octa-cis-undecaprenyl diphospho-N-acetyl-alpha-D-muramoyl-L-alanyl-D-glutamyl-meso-2,6-diaminopimeloyl-D-alanyl-D-alanine + UDP-N-acetyl-alpha-D-glucosamine = di-trans,octa-cis-undecaprenyl diphospho-[N-acetyl-alpha-D-glucosaminyl-(1-&gt;4)]-N-acetyl-alpha-D-muramoyl-L-alanyl-D-glutamyl-meso-2,6-diaminopimeloyl-D-alanyl-D-alanine + UDP + H(+). It functions in the pathway cell wall biogenesis; peptidoglycan biosynthesis. In terms of biological role, cell wall formation. Catalyzes the transfer of a GlcNAc subunit on undecaprenyl-pyrophosphoryl-MurNAc-pentapeptide (lipid intermediate I) to form undecaprenyl-pyrophosphoryl-MurNAc-(pentapeptide)GlcNAc (lipid intermediate II). The sequence is that of UDP-N-acetylglucosamine--N-acetylmuramyl-(pentapeptide) pyrophosphoryl-undecaprenol N-acetylglucosamine transferase from Deinococcus deserti (strain DSM 17065 / CIP 109153 / LMG 22923 / VCD115).